The sequence spans 262 residues: Putative 1-acyl-sn-glycerol-3-phosphate acyltransferase acl-1 (262 aa).

A run of 3 helical transmembrane segments spans residues 3-23 (FLAILFVIAVLLLLAQLPVIG), 29-49 (VYFGMCLIIGGFLGGLASIPF), and 89-109 (IIIANHQSALDVLGMSFAWPV). The HXXXXD motif signature appears at 94-99 (HQSALD).

This sequence belongs to the 1-acyl-sn-glycerol-3-phosphate acyltransferase family.

Its subcellular location is the membrane. The enzyme catalyses a 1-acyl-sn-glycero-3-phosphate + an acyl-CoA = a 1,2-diacyl-sn-glycero-3-phosphate + CoA. The protein operates within phospholipid metabolism; CDP-diacylglycerol biosynthesis; CDP-diacylglycerol from sn-glycerol 3-phosphate: step 2/3. Its function is as follows. Converts lysophosphatidic acid (LPA) into phosphatidic acid by incorporating an acyl moiety at the sn-2 position of the glycerol backbone. This is Putative 1-acyl-sn-glycerol-3-phosphate acyltransferase acl-1 (acl-1) from Caenorhabditis elegans.